The chain runs to 378 residues: Integrator complex assembly factor WDR73 (378 aa).

WD repeat units follow at residues 73 to 113, 121 to 163, 167 to 205, 214 to 255, 266 to 305, and 322 to 371; these read DFKV…VWQV, KAVS…VVDL, KTTY…LVDT, NRSP…LLDP, QCPV…VYDA, and EPLF…VWDW.

Belongs to the WD repeat WDR73 family. In terms of assembly, interacts with INTS9 and INTS11; the interaction is direct. Part of the multiprotein complex composed of BRAT1, WDR73, as well as integrator complex subunits INTS9 and INTS11. Expressed in kidney and brain. In the kidney, expressed in glomeruli, most probably in podocytes, and in tubules (at protein level). In the brain, expressed in the cerebellum, with high levels in Purkinje cells and their projecting axons, in the deep cerebellar nuclei and in pyramidal neurons of the cerebral cortex (at protein level). In the white matter, mainly present in astrocytes, but not in oligodendrocytes (at protein level). Also highly expressed in endothelial cells of cerebral capillaries (at protein level).

Its subcellular location is the cytoplasm. The protein localises to the cytoskeleton. It localises to the spindle. The protein resides in the spindle pole. It is found in the cleavage furrow. Functionally, component of a multiprotein complex required for the assembly of the RNA endonuclease module of the integrator complex. Associates with INTS9 and INTS11 in the cytoplasm, stabilizing the INTS9-INTS11 heterodimer and blocking the active site of INTS11. BRAT1 then joins the complex and plugs the active site of INTS11, leading to WDR73 release and nuclear import of INTS9 and INTS11. The sequence is that of Integrator complex assembly factor WDR73 from Homo sapiens (Human).